The primary structure comprises 391 residues: GATA-binding factor 6-B (391 aa).

Over residues 57–69 (GTHSVNSHWSQAT) the composition is skewed to polar residues. Residues 57 to 107 (GTHSVNSHWSQATSESSSYSSSSPHPSSRYHYSPSPPMANGSTRDTGYSSS) are disordered. Residues 70–89 (SESSSYSSSSPHPSSRYHYS) are compositionally biased toward low complexity. Residues 96–107 (NGSTRDTGYSSS) show a composition bias toward polar residues. 2 GATA-type zinc fingers span residues 182-206 (CVNC…CNAC) and 236-260 (CANC…CNAC). The segment at 277–334 (KEGIQTRKRKPKNLNKSKSSSSNGNSSHHITMTPTSTTSSTNSDDCIKNGSPSQNTAP) is disordered. Residues 282 to 291 (TRKRKPKNLN) are compositionally biased toward basic residues. The segment covering 292–319 (KSKSSSSNGNSSHHITMTPTSTTSSTNS) has biased composition (low complexity).

As to expression, in embryos, expressed in the presumptive heart mesoderm. In adults, widely distributed but predominant in the heart.

It localises to the nucleus. In terms of biological role, transcriptional activator that binds 5'-GATA-3'-containing motifs within gene promoters. Regulates cardiac-specific transcription during embryogenesis and thereby cardiogenesis. This chain is GATA-binding factor 6-B (gata6-b), found in Xenopus laevis (African clawed frog).